The following is a 249-amino-acid chain: Aquaporin (249 aa).

Over 1 to 11 (MTRKWIKKLQS) the chain is Cytoplasmic. Residues 12 to 32 (YIGEFFASFIFGFAVYTSIIG) form a helical membrane-spanning segment. At 33-39 (SAQTGQS) the chain is on the extracellular side. Residues 40-60 (AGPIIVALTIALSGVAIIYSF) form a helical membrane-spanning segment. The Cytoplasmic segment spans residues 61–83 (CDITVAHFNPAITFSAMCFRRLP). An NPA motif is present at residues 69-71 (NPA). A helical membrane pass occupies residues 84–104 (FFGGIFIIIFQVAGFIIAGLA). The Extracellular portion of the chain corresponds to 105 to 133 (SVAVLPGKYKNKLEIARPKRVADNVSRGR). Residues 134–154 (IFGTEFFLTAILVYVAFAVGV) form a helical membrane-spanning segment. Topologically, residues 155–179 (NPYTPPKDEHGDQLDPDEGLTEGRK) are cytoplasmic. Residues 180-200 (ITAPLAIGFTLGFCALLGIAS) form a helical membrane-spanning segment. Residues 201–223 (SGGAFNPGIVLSPMILTGTWDFW) lie on the Extracellular side of the membrane. Residues 206–208 (NPG) carry the NPG motif. Residues 224 to 246 (WVYLLGQFSGGLLGGGLQRFLLY) traverse the membrane as a helical segment. At 247-249 (KIF) the chain is on the cytoplasmic side.

Belongs to the MIP/aquaporin (TC 1.A.8) family.

The protein localises to the cell membrane. Water channel required to facilitate the transport of water across membranes. Involved in osmotolerance. This is Aquaporin (AQP) from Vairimorpha ceranae (strain BRL01) (Microsporidian parasite).